The sequence spans 296 residues: uncharacterized protein (296 aa).

Residues 1 to 95 enclose the FAD-binding FR-type domain; the sequence is MYKIVSKKEL…VGPLGVPSEF (95 aa).

This is an uncharacterized protein from Clostridium beijerinckii (Clostridium MP).